Reading from the N-terminus, the 255-residue chain is TIR domain-containing protein (255 aa).

Residues 9–185 (LSDQVFINFR…DIVKEVKKQL (177 aa)) enclose the TIR domain. Residue Glu-83 is part of the active site. A run of 2 helical transmembrane segments spans residues 195–215 (AIGV…FIAP) and 223–243 (FFQT…SWFW). The KASH domain occupies 201–255 (LAITINLIFSFFIAPKYLPDQKFFQTPEWFIGTLAVVLASWFWYKNNQNKAPPPS).

In terms of assembly, forms homomers. Interacts with SUN1, SUN2, SUN3, SUN4 and SUN5.

The protein resides in the nucleus membrane. It carries out the reaction NAD(+) + H2O = ADP-D-ribose + nicotinamide + H(+). Its function is as follows. Could play a role in nuclear morphology, specifically nuclear size. This chain is TIR domain-containing protein, found in Arabidopsis thaliana (Mouse-ear cress).